Here is a 184-residue protein sequence, read N- to C-terminus: MAAVTKKIKRDPAKNPMRDLHIRKLCLNICVGESGDRLTRAAKVLEQLTGQQPVFSKARYTVRSFGIRRNEKIAVHCTVRGAKAEEILERGLKVREYELRRENFSSTGNFGFGIQEHIDLGIKYDPSIGIYGLDFYVVLGRPGYNVNHRKRKSGTVGFQHRLTKEDAMKWFQQKYDGIILNTKK.

Belongs to the universal ribosomal protein uL5 family. In terms of assembly, component of the large ribosomal subunit. Interacts with Fmr1 to form the RNA-induced silencing complex (RISC), a ribonucleoprotein (RNP) complex involved in translation regulation, other components of the complex are RpL5, Rm62, AGO2 and Dcr-1.

The protein localises to the nucleus. It is found in the cytoplasm. Its function is as follows. Component of the ribosome, a large ribonucleoprotein complex responsible for the synthesis of proteins in the cell. The small ribosomal subunit (SSU) binds messenger RNAs (mRNAs) and translates the encoded message by selecting cognate aminoacyl-transfer RNA (tRNA) molecules. The large subunit (LSU) contains the ribosomal catalytic site termed the peptidyl transferase center (PTC), which catalyzes the formation of peptide bonds, thereby polymerizing the amino acids delivered by tRNAs into a polypeptide chain. The nascent polypeptides leave the ribosome through a tunnel in the LSU and interact with protein factors that function in enzymatic processing, targeting, and the membrane insertion of nascent chains at the exit of the ribosomal tunnel. The chain is Large ribosomal subunit protein uL5 (RpL11) from Drosophila melanogaster (Fruit fly).